The primary structure comprises 456 residues: MLNNTMSVVILAAGKGTRMYSDLPKVLHTLAGKPMVQHVIDAANELGASNVHLVYGHGGDLLKKTLSDDKLNWVLQAEQLGTGHAMQQAAPFFADDEDILMLYGDVPLIAVETLTRLREAKPQGGIGLLTVKLDDPTGYGRITRENGKVTGIVEHKDASDEQRQIQEINTGILIANGADLKRWLSKLNNNNAQGEYYITDIIAMAHHEGHEITAVHPTRISETDGVNNRLQLSRLERIYQAEQAEKLLLAGVMLRDPARFDLRGTLAHGRDVEIDTNVIIEGQVTLGHRVKIGTGCVIKNSVIGDDCEISPYSVVEDARLDAACTIGPFARLRPGAELLEGAHVGNFVEMKKARLGKGSKAGHLTYLGDAEIGDNVNIGAGTITCNYDGANKFKTIIGDDVFVGSDSQLVAPVTIGKGVTIAAGTTVTRDVAENELVLSRVPQVNKQGWQRPVKKK.

The segment at Met-1 to Arg-229 is pyrophosphorylase. UDP-N-acetyl-alpha-D-glucosamine contacts are provided by residues Leu-11–Gly-14, Lys-25, Gln-76, Gly-81–Thr-82, Tyr-103–Asp-105, Gly-140, Glu-154, Asn-169, and Asn-227. Position 105 (Asp-105) interacts with Mg(2+). Residue Asn-227 coordinates Mg(2+). The segment at Leu-230–Ala-250 is linker. Residues Gly-251 to Lys-456 form an N-acetyltransferase region. Positions 333 and 351 each coordinate UDP-N-acetyl-alpha-D-glucosamine. Catalysis depends on His-363, which acts as the Proton acceptor. UDP-N-acetyl-alpha-D-glucosamine is bound by residues Tyr-366 and Asn-377. Acetyl-CoA contacts are provided by residues Ala-380, Asn-386 to Tyr-387, Ser-405, Ala-423, and Arg-440.

The protein in the N-terminal section; belongs to the N-acetylglucosamine-1-phosphate uridyltransferase family. This sequence in the C-terminal section; belongs to the transferase hexapeptide repeat family. As to quaternary structure, homotrimer. Mg(2+) serves as cofactor.

It localises to the cytoplasm. The enzyme catalyses alpha-D-glucosamine 1-phosphate + acetyl-CoA = N-acetyl-alpha-D-glucosamine 1-phosphate + CoA + H(+). It carries out the reaction N-acetyl-alpha-D-glucosamine 1-phosphate + UTP + H(+) = UDP-N-acetyl-alpha-D-glucosamine + diphosphate. It participates in nucleotide-sugar biosynthesis; UDP-N-acetyl-alpha-D-glucosamine biosynthesis; N-acetyl-alpha-D-glucosamine 1-phosphate from alpha-D-glucosamine 6-phosphate (route II): step 2/2. The protein operates within nucleotide-sugar biosynthesis; UDP-N-acetyl-alpha-D-glucosamine biosynthesis; UDP-N-acetyl-alpha-D-glucosamine from N-acetyl-alpha-D-glucosamine 1-phosphate: step 1/1. It functions in the pathway bacterial outer membrane biogenesis; LPS lipid A biosynthesis. Functionally, catalyzes the last two sequential reactions in the de novo biosynthetic pathway for UDP-N-acetylglucosamine (UDP-GlcNAc). The C-terminal domain catalyzes the transfer of acetyl group from acetyl coenzyme A to glucosamine-1-phosphate (GlcN-1-P) to produce N-acetylglucosamine-1-phosphate (GlcNAc-1-P), which is converted into UDP-GlcNAc by the transfer of uridine 5-monophosphate (from uridine 5-triphosphate), a reaction catalyzed by the N-terminal domain. The protein is Bifunctional protein GlmU of Enterobacter sp. (strain 638).